Consider the following 356-residue polypeptide: S-adenosylmethionine:tRNA ribosyltransferase-isomerase (356 aa).

Belongs to the QueA family. As to quaternary structure, monomer.

The protein localises to the cytoplasm. The catalysed reaction is 7-aminomethyl-7-carbaguanosine(34) in tRNA + S-adenosyl-L-methionine = epoxyqueuosine(34) in tRNA + adenine + L-methionine + 2 H(+). The protein operates within tRNA modification; tRNA-queuosine biosynthesis. Transfers and isomerizes the ribose moiety from AdoMet to the 7-aminomethyl group of 7-deazaguanine (preQ1-tRNA) to give epoxyqueuosine (oQ-tRNA). In Escherichia coli O127:H6 (strain E2348/69 / EPEC), this protein is S-adenosylmethionine:tRNA ribosyltransferase-isomerase.